Reading from the N-terminus, the 325-residue chain is 2-dehydro-3-deoxygluconokinase (325 aa).

Substrate-binding positions include 49–53 (GSEAN), Tyr105, 121–123 (YYR), and Arg181. ATP contacts are provided by residues 179–181 (NIR), 240–245 (KLGAEG), and 269–272 (GAGD). 2 residues coordinate substrate: Asp272 and Asp308. The active-site Proton acceptor is Asp272.

The protein belongs to the carbohydrate kinase PfkB family. Homohexamer; trimer of dimers.

It catalyses the reaction 2-dehydro-3-deoxy-D-gluconate + ATP = 2-dehydro-3-deoxy-6-phospho-D-gluconate + ADP + H(+). It functions in the pathway carbohydrate acid metabolism; 2-dehydro-3-deoxy-D-gluconate degradation; D-glyceraldehyde 3-phosphate and pyruvate from 2-dehydro-3-deoxy-D-gluconate: step 1/2. Its function is as follows. Involved in the degradation of glucose via the semi-phosphorylative Entner-Doudoroff pathway. Catalyzes the phosphorylation of 2-keto-3-deoxygluconate (KDG) yielding 2-keto-3-deoxy-6-phosphogluconate (KDPG). The sequence is that of 2-dehydro-3-deoxygluconokinase (kdgK) from Thermoproteus tenax.